We begin with the raw amino-acid sequence, 384 residues long: Anhydro-N-acetylmuramic acid kinase (384 aa).

ATP is bound at residue 17–24 (GTSMDGVD).

It belongs to the anhydro-N-acetylmuramic acid kinase family.

It catalyses the reaction 1,6-anhydro-N-acetyl-beta-muramate + ATP + H2O = N-acetyl-D-muramate 6-phosphate + ADP + H(+). The protein operates within amino-sugar metabolism; 1,6-anhydro-N-acetylmuramate degradation. Its pathway is cell wall biogenesis; peptidoglycan recycling. Its function is as follows. Catalyzes the specific phosphorylation of 1,6-anhydro-N-acetylmuramic acid (anhMurNAc) with the simultaneous cleavage of the 1,6-anhydro ring, generating MurNAc-6-P. Is required for the utilization of anhMurNAc either imported from the medium or derived from its own cell wall murein, and thus plays a role in cell wall recycling. The chain is Anhydro-N-acetylmuramic acid kinase from Burkholderia thailandensis (strain ATCC 700388 / DSM 13276 / CCUG 48851 / CIP 106301 / E264).